Here is a 464-residue protein sequence, read N- to C-terminus: Fumarate hydratase class II (464 aa).

Substrate is bound by residues 98-100 (SGT), 129-132 (HPND), 139-141 (SSN), and T187. Catalysis depends on H188, which acts as the Proton donor/acceptor. S318 is a catalytic residue. Substrate is bound by residues S319 and 324–326 (KVN).

This sequence belongs to the class-II fumarase/aspartase family. Fumarase subfamily. Homotetramer.

Its subcellular location is the cytoplasm. It carries out the reaction (S)-malate = fumarate + H2O. The protein operates within carbohydrate metabolism; tricarboxylic acid cycle; (S)-malate from fumarate: step 1/1. Functionally, involved in the TCA cycle. Catalyzes the stereospecific interconversion of fumarate to L-malate. This is Fumarate hydratase class II from Haemophilus ducreyi (strain 35000HP / ATCC 700724).